The sequence spans 360 residues: Putative agmatine deiminase (360 aa).

Cys353 acts as the Amidino-cysteine intermediate in catalysis.

It belongs to the agmatine deiminase family.

It catalyses the reaction agmatine + H2O = N-carbamoylputrescine + NH4(+). This chain is Putative agmatine deiminase, found in Vibrio parahaemolyticus serotype O3:K6 (strain RIMD 2210633).